We begin with the raw amino-acid sequence, 121 residues long: Large ribosomal subunit protein uL14 (121 aa).

The protein belongs to the universal ribosomal protein uL14 family. As to quaternary structure, part of the 50S ribosomal subunit. Forms a cluster with proteins L3 and L19. In the 70S ribosome, L14 and L19 interact and together make contacts with the 16S rRNA in bridges B5 and B8.

Binds to 23S rRNA. Forms part of two intersubunit bridges in the 70S ribosome. The sequence is that of Large ribosomal subunit protein uL14 from Akkermansia muciniphila (strain ATCC BAA-835 / DSM 22959 / JCM 33894 / BCRC 81048 / CCUG 64013 / CIP 107961 / Muc).